A 150-amino-acid polypeptide reads, in one-letter code: Catabolic 3-dehydroquinase 2 (150 aa).

The active-site Proton acceptor is tyrosine 23. Residues asparagine 74, histidine 80, and aspartate 87 each contribute to the substrate site. Histidine 100 acts as the Proton donor in catalysis. Residues 101–102 (IT) and arginine 111 each bind substrate.

The protein belongs to the type-II 3-dehydroquinase family. Homododecamer. Adopts a ring-like structure, composed of an arrangement of two hexameric rings stacked on top of one another.

The enzyme catalyses 3-dehydroquinate = 3-dehydroshikimate + H2O. The protein operates within aromatic compound metabolism; 3,4-dihydroxybenzoate biosynthesis; 3,4-dihydroxybenzoate from 3-dehydroquinate: step 1/2. Functionally, is involved in the catabolism of quinate. Allows the utilization of quinate as carbon source via the beta-ketoadipate pathway. This chain is Catabolic 3-dehydroquinase 2, found in Neosartorya fischeri (strain ATCC 1020 / DSM 3700 / CBS 544.65 / FGSC A1164 / JCM 1740 / NRRL 181 / WB 181) (Aspergillus fischerianus).